We begin with the raw amino-acid sequence, 164 residues long: Interleukin-31 (164 aa).

The signal sequence occupies residues 1-23 (MASHSGPSTSVLFLFCCLGGWLA). Residues Asn-67 and Asn-100 are each glycosylated (N-linked (GlcNAc...) asparagine).

In terms of tissue distribution, detected at low levels in testis, bone marrow, skeletal muscle, kidney, colon, thymus, small intestine and trachea.

It is found in the secreted. Functionally, activates STAT3 and possibly STAT1 and STAT5 through the IL31 heterodimeric receptor composed of IL31RA and OSMR. May function in skin immunity. Enhances myeloid progenitor cell survival in vitro. Induces RETNLA and serum amyloid A protein expression in macrophages. In Homo sapiens (Human), this protein is Interleukin-31 (IL31).